The sequence spans 363 residues: MGEVYEKNNIDFDSIAKMLLIKYKDFILSKFKKAAPVENIRFQNLVHTNQFAQGVLGQSQHLCTVYDNPSWHSIVLETLDLDLIYKNVDKEFAKDGHAEGENIYTDYLVKELLRYFKQDFFKWCNKPDCNHCGQNTSENMTPLGSQGPNGEESKFNCGTVEIYKCNRCGNITRFPRYNDPIKLLETRKGRCGEWCNLFTLILKSFGLDVRYVWNREDHVWCEYFSNFLNRWVHVDSCEQSFDQPYIYSINWNKKMSYCIAFGKDGVVDVSKRYILQNELPRDQIKEEDLKFLCQFITKRLRYSLNDDEIYQLACRDEQEQIELIRGKTQETKSESVSAASKSSNRGRESGSADWKAQRGEDGK.

The Zn(2+) site is built by C129, C132, C165, and C168. The active-site Nucleophile is the C191. Catalysis depends on residues H218 and D235. Residue E238 coordinates substrate. Residues 325–363 are disordered; it reads RGKTQETKSESVSAASKSSNRGRESGSADWKAQRGEDGK. A compositionally biased stretch (low complexity) spans 334–343; the sequence is ESVSAASKSS. A compositionally biased stretch (basic and acidic residues) spans 345–363; the sequence is RGRESGSADWKAQRGEDGK.

This sequence belongs to the transglutaminase-like superfamily. PNGase family. In terms of assembly, interacts with RAD23 subunit of 26S proteasome. Requires Zn(2+) as cofactor.

The protein resides in the cytoplasm. Its subcellular location is the nucleus. The enzyme catalyses Hydrolysis of an N(4)-(acetyl-beta-D-glucosaminyl)asparagine residue in which the glucosamine residue may be further glycosylated, to yield a (substituted) N-acetyl-beta-D-glucosaminylamine and a peptide containing an aspartate residue.. Its activity is regulated as follows. Inhibited by Z-VAD-fmk, a well-known caspase inhibitor. Also inhibited by Man9GlcNAc2-iodoacetoamide. Both molecules inhibit enzyme activity through covalent binding of the carbohydrate to the single Cys-191 residue. In terms of biological role, specifically deglycosylates the denatured form of N-linked glycoproteins in the cytoplasm and assists their proteasome-mediated degradation. Cleaves the beta-aspartyl-glucosamine (GlcNAc) of the glycan and the amide side chain of Asn, converting Asn to Asp. Prefers proteins containing high-mannose over those bearing complex type oligosaccharides. Can recognize misfolded proteins in the endoplasmic reticulum that are exported to the cytosol to be destroyed and deglycosylate them, while it has no activity toward native proteins. Deglycosylation is a prerequisite for subsequent proteasome-mediated degradation of some, but not all, misfolded glycoproteins. Involved in the formation of free oligosaccharide in cytosol. This chain is Peptide-N(4)-(N-acetyl-beta-glucosaminyl)asparagine amidase (PNG1), found in Saccharomyces cerevisiae (strain ATCC 204508 / S288c) (Baker's yeast).